A 204-amino-acid polypeptide reads, in one-letter code: MNPVVCAFGVIFVVVTLELVVAHPGKDVLGCHNGTSITVDECCAIPMLANKTVIEKCKAAHPFKPPQNTDDKGPRGHPGECIAECIMKGMGALKNEKVDGPAFRKAIEPVVKANPAFAKLLDDTVKQCHESINVDSEFTRYVTKPVCKADAKAFINCVYGTLFEQCPTNVWTQKDGCTQLKDKIKKGCAYFALRKHGGRRMRPT.

An N-terminal signal peptide occupies residues 1 to 22 (MNPVVCAFGVIFVVVTLELVVA). 3 cysteine pairs are disulfide-bonded: Cys57-Cys85, Cys81-Cys147, and Cys128-Cys157.

Belongs to the PBP/GOBP family.

The protein localises to the secreted. Functionally, present in the aqueous fluid surrounding olfactory sensory dendrites and are thought to aid in the capture and transport of hydrophobic odorants into and through this fluid. The protein is General odorant-binding protein 67 (Obp67) of Anopheles gambiae (African malaria mosquito).